A 1135-amino-acid chain; its full sequence is Glutamate receptor ionotropic, NMDA 3A (1135 aa).

Residues 1-23 (MRRLSLWWLLSRVCLLLPPPCAL) form the signal peptide. Topologically, residues 24 to 674 (VLAGVPSSSS…PIGAFMWPLH (651 aa)) are extracellular. A disordered region spans residues 60 to 117 (TAPRAASRAQEGGRAGAQRDDPESGTWRPPAPSQGARWLGSALHGRGPPGSRKLGEGA). Asn-145, Asn-264, Asn-275, Asn-285, Asn-296, Asn-300, Asn-426, Asn-439, Asn-549, and Asn-565 each carry an N-linked (GlcNAc...) asparagine glycan. Disulfide bonds link Cys-537–Cys-575 and Cys-543–Cys-576. Glycine contacts are provided by Ser-631, Ser-633, and Arg-638. Residues Ser-633 and Arg-638 each coordinate D-serine. The helical transmembrane segment at 675–694 (WTMWLGIFVALHITAIFLTL) threads the bilayer. Topologically, residues 695–715 (YEWKSPFGMTPKGRNRNKVFS) are cytoplasmic. The segment at residues 716–727 (FSSALNVCYALL) is an intramembrane region (discontinuously helical). The Cytoplasmic portion of the chain corresponds to 728–741 (FGRTAAIKPPKCWT). The chain crosses the membrane as a helical span at residues 742–761 (GRFLMNLWAIFCMFCLSTYT). Residues 762 to 932 (ANLAAVMVGE…TLQMGIKHFS (171 aa)) lie on the Extracellular side of the membrane. Residue Ser-801 participates in glycine binding. Residues Ser-801, Ala-802, and Asp-845 each coordinate D-serine. Asp-845 serves as a coordination point for glycine. The cysteines at positions 859 and 913 are disulfide-linked. An N-linked (GlcNAc...) asparagine glycan is attached at Asn-886. Residues 933 to 948 (GLFVLLCIGFGLSILT) form a helical membrane-spanning segment. Residues 949–1135 (TIGEHIVHRL…YQKTNRTCES (187 aa)) lie on the Cytoplasmic side of the membrane. The tract at residues 951-987 (GEHIVHRLLLPRIKNKSKLQYWLHTSQRFHRALNTSF) is PPP2CB binding site. A coiled-coil region spans residues 1080 to 1129 (TTNGKADSLNVTRSSVIQELSELEKQIQVIRQELQLAVSRKTELEEYQKT). Positions 1082 to 1115 (NGKADSLNVTRSSVIQELSELEKQIQVIRQELQL) are GIT1-binding.

It belongs to the glutamate-gated ion channel (TC 1.A.10.1) family. NR3A/GRIN3A subfamily. As to quaternary structure, heterotetramer. Forms heterotetrameric channels composed of two GluN1/zeta subunits (GRIN1), and two identical GluN3 subunits (GRIN3A or GRIN3B) (in vitro). Can also form heterotetrameric channels that contain at least two GluN1 subunits and at least a combination of one GluN2 and one GluN3 subunits (in vitro). Does not form functional homomeric channels. Found in a complex with GRIN1, GRIN2A or GRIN2B and PPP2CB. Probably interacts with PPP2CB. No complex with PPP2CB is detected when NMDARs are stimulated by NMDA. Interacts (via C-terminus) with GIT1, but not with GRIA1/GluA1, nor with synaptophysin/SYP; this interaction competes with GIT1 interaction with ARHGEF7/beta-PIX. N-glycosylated. Isoform 1 and isoform 2 are expressed in olfactory bulb, frontal occipital, entorhinal and pyriform cortices, hippocampus, striatum, thalamus, cerebellum and spinal cord.

The protein localises to the cell membrane. It localises to the postsynaptic cell membrane. Its subcellular location is the postsynaptic density. It catalyses the reaction Ca(2+)(in) = Ca(2+)(out). The catalysed reaction is Na(+)(in) = Na(+)(out). Its activity is regulated as follows. Excitatory glycine receptors are inhibited by D-serine at a concentrion of 10uM. Component of a non-conventional N-methyl-D-aspartate (NMDA) receptors (NMDARs) that function as heterotetrameric, ligand-gated cation channels with low calcium permeability and low voltage-dependent block by Mg(2+). During the development of neural circuits, participates in the synaptic refinement period, restricting spine maturation and growth. Forms glutamatergic receptor complexes with GluN1 and GluN2 subunits which are activated by glycine binding to the GluN1 and GluN3 subunits and L-glutamate binding to GluN2 subunits. Forms excitatory glycinergic receptor complexes with GluN1 alone which are activated by glycine binding to the GluN1 and GluN3 subunits. GluN3A subunit also binds D-serine. Each GluN3 subunit confers differential attributes to channel properties, including activation, deactivation and desensitization kinetics, pH sensitivity, Ca2(+) permeability, and binding to allosteric modulators. By competing with GIT1 interaction with ARHGEF7/beta-PIX, may reduce GIT1/ARHGEF7-regulated local activation of RAC1, hence affecting signaling and limiting the maturation and growth of inactive synapses. In Rattus norvegicus (Rat), this protein is Glutamate receptor ionotropic, NMDA 3A.